Consider the following 330-residue polypeptide: Anthranilate phosphoribosyltransferase (330 aa).

Residues Gly-75, 78–79 (GD), Thr-83, 85–88 (NVST), 103–111 (KHGNRAASS), and Ala-115 each bind 5-phospho-alpha-D-ribose 1-diphosphate. Residue Gly-75 participates in anthranilate binding. Residue Ser-87 participates in Mg(2+) binding. Asn-106 lines the anthranilate pocket. Arg-161 contributes to the anthranilate binding site. 2 residues coordinate Mg(2+): Asp-220 and Glu-221.

This sequence belongs to the anthranilate phosphoribosyltransferase family. In terms of assembly, homodimer. The cofactor is Mg(2+).

It catalyses the reaction N-(5-phospho-beta-D-ribosyl)anthranilate + diphosphate = 5-phospho-alpha-D-ribose 1-diphosphate + anthranilate. It participates in amino-acid biosynthesis; L-tryptophan biosynthesis; L-tryptophan from chorismate: step 2/5. Functionally, catalyzes the transfer of the phosphoribosyl group of 5-phosphorylribose-1-pyrophosphate (PRPP) to anthranilate to yield N-(5'-phosphoribosyl)-anthranilate (PRA). In Erythrobacter litoralis (strain HTCC2594), this protein is Anthranilate phosphoribosyltransferase.